The following is a 152-amino-acid chain: Large ribosomal subunit protein bL9 (152 aa).

Belongs to the bacterial ribosomal protein bL9 family.

Binds to the 23S rRNA. The chain is Large ribosomal subunit protein bL9 from Nocardia farcinica (strain IFM 10152).